The sequence spans 880 residues: Guanine nucleotide-binding protein subunit beta 2 (880 aa).

Position 24 is a phosphoserine (Ser24). Kelch repeat units follow at residues Asn291–Asn339, His377–Ile425, and Thr501–Ser552. A disordered region spans residues Phe624 to Asp649. A compositionally biased stretch (low complexity) spans Ala638–Ser647. The stretch at Thr691–Ser738 is one Kelch 4 repeat.

G proteins are composed of 3 units, alpha, beta and gamma. GPB1 interacts with the alpha subunit GPA2.

It localises to the cytoplasm. Its subcellular location is the mitochondrion. Beta subunit of a guanine nucleotide-binding protein (G protein). G proteins are involved as modulators or transducers in various transmembrane signaling systems. The beta and gamma chains are required for the GTPase activity, for replacement of GDP by GTP, and for G protein-effector interaction. Involved in the determination of the cAMP level according to nutritional conditions, most probably as a regulator of cAMP phosphodiesterase. Required for the control of pseudohyphal and haploid invasive growth. The chain is Guanine nucleotide-binding protein subunit beta 2 (GPB2) from Saccharomyces cerevisiae (strain ATCC 204508 / S288c) (Baker's yeast).